The primary structure comprises 349 residues: GTP 3',8-cyclase (349 aa).

Positions 24-249 (PFGRAVTYLR…KDMSYRTGGP (226 aa)) constitute a Radical SAM core domain. Arg33 provides a ligand contact to GTP. 2 residues coordinate [4Fe-4S] cluster: Cys40 and Cys44. Tyr46 is an S-adenosyl-L-methionine binding site. Residue Cys47 participates in [4Fe-4S] cluster binding. A GTP-binding site is contributed by Arg82. Gly86 is an S-adenosyl-L-methionine binding site. Thr116 is a binding site for GTP. Ser140 serves as a coordination point for S-adenosyl-L-methionine. Lys176 is a GTP binding site. Met210 contacts S-adenosyl-L-methionine. [4Fe-4S] cluster is bound by residues Cys273 and Cys276. 278-280 (RVR) contributes to the GTP binding site. A [4Fe-4S] cluster-binding site is contributed by Cys290.

It belongs to the radical SAM superfamily. MoaA family. In terms of assembly, monomer and homodimer. [4Fe-4S] cluster serves as cofactor.

The catalysed reaction is GTP + AH2 + S-adenosyl-L-methionine = (8S)-3',8-cyclo-7,8-dihydroguanosine 5'-triphosphate + 5'-deoxyadenosine + L-methionine + A + H(+). The protein operates within cofactor biosynthesis; molybdopterin biosynthesis. Catalyzes the cyclization of GTP to (8S)-3',8-cyclo-7,8-dihydroguanosine 5'-triphosphate. This is GTP 3',8-cyclase from Sinorhizobium medicae (strain WSM419) (Ensifer medicae).